The sequence spans 326 residues: uncharacterized protein (326 aa).

It belongs to the ParB family.

This is an uncharacterized protein from Acidianus two-tailed virus (ATV).